A 362-amino-acid polypeptide reads, in one-letter code: EARP-interacting protein 1 (362 aa).

4 WD repeats span residues 61-108 (HPAG…RTLE), 206-246 (AHIH…SALT), 250-290 (PHAH…SEQQ), and 319-359 (EHED…KYAL).

This sequence belongs to the WD repeat EIPR1 family. In terms of tissue distribution, expressed in the hypodermis and the pharynx.

It localises to the cytoplasm. Functionally, plays a role in the trafficking of cargo to dense-core vesicles, probably through association with the endosome-associated recycling protein (EARP) complex. Important for neuronal function. This is EARP-interacting protein 1 from Caenorhabditis elegans.